Here is a 175-residue protein sequence, read N- to C-terminus: Protein FLOWERING LOCUS T (175 aa).

Belongs to the phosphatidylethanolamine-binding protein family. Interacts with FD/BZIP14 and FDP/BZIP27. Interacts with FTIP1/MCTP1 in phloem companion cells. Interacts with NAKR1. In terms of tissue distribution, mostly localized in leaves vasculature.

Its subcellular location is the cytoplasm. The protein localises to the nucleus. It is found in the endoplasmic reticulum. In terms of biological role, component of the mobile flower-promoting signal (floral stimulus or florigen). Promotes the transition from vegetative growth to flowering. Required for 'SEPALLATA3' (SEP3) and 'FRUITFULL' (FUL) accumulation in mature rosette leaves. Seems to acts in parallel with 'LEAFY' to induce flowering by regulating 'APETALA1'. Translated in leaves and then transported to the shoot apical meristem where it activates the transcription of several floral meristem identity genes. May play a role in both the autonomous and the long-day flowering pathways. The chain is Protein FLOWERING LOCUS T from Arabidopsis thaliana (Mouse-ear cress).